A 447-amino-acid chain; its full sequence is C4-dicarboxylate transport protein (447 aa).

The next 10 membrane-spanning stretches (helical) occupy residues 21 to 41, 57 to 77, 92 to 112, 141 to 161, 163 to 183, 201 to 221, 232 to 252, 320 to 340, 345 to 365, and 368 to 388; these read HLYV…YFAP, LVKM…IAGM, IYFL…VNIV, SLIG…LASG, ILQV…VGEA, LVAI…AYTV, LAML…IVLG, IYMT…LSWG, LLAV…AGFV, and AATL…IFGV.

Belongs to the dicarboxylate/amino acid:cation symporter (DAACS) (TC 2.A.23) family.

The protein resides in the cell inner membrane. Responsible for the transport of dicarboxylates such as succinate, fumarate, and malate from the periplasm across the membrane. This chain is C4-dicarboxylate transport protein, found in Granulibacter bethesdensis (strain ATCC BAA-1260 / CGDNIH1).